The chain runs to 314 residues: L-lactate dehydrogenase 1 (314 aa).

Residues Val16, Asp37, Lys42, Tyr68, and 82–83 contribute to the NAD(+) site; that span reads GL. Residues Gln85, Arg91, and 123–126 each bind substrate; that span reads NPVD. NAD(+)-binding positions include 121-123 and Ser146; that span reads ATN. 151-154 serves as a coordination point for substrate; sequence DSAR. The beta-D-fructose 1,6-bisphosphate site is built by Arg156 and His171. Catalysis depends on His178, which acts as the Proton acceptor. Phosphotyrosine is present on Tyr223. Thr232 is a substrate binding site.

This sequence belongs to the LDH/MDH superfamily. LDH family. As to quaternary structure, homotetramer.

It is found in the cytoplasm. The catalysed reaction is (S)-lactate + NAD(+) = pyruvate + NADH + H(+). It functions in the pathway fermentation; pyruvate fermentation to lactate; (S)-lactate from pyruvate: step 1/1. With respect to regulation, allosterically activated by fructose 1,6-bisphosphate (FBP). Catalyzes the conversion of lactate to pyruvate. The protein is L-lactate dehydrogenase 1 of Bacillus anthracis.